Consider the following 101-residue polypeptide: Ubiquitin-related modifier 1 homolog (101 aa).

The residue at position 101 (G101) is a 1-thioglycine. G101 is covalently cross-linked (Glycyl lysine isopeptide (Gly-Lys) (interchain with K-? in acceptor proteins)).

The protein belongs to the URM1 family. As to quaternary structure, interacts with cer. In terms of processing, C-terminal thiocarboxylation occurs in 2 steps, it is first acyl-adenylated (-COAMP) via the hesA/moeB/thiF part of the MOCS3 homolog, then thiocarboxylated (-COSH) via the rhodanese domain of the MOCS3 homolog.

Its subcellular location is the cytoplasm. It functions in the pathway tRNA modification; 5-methoxycarbonylmethyl-2-thiouridine-tRNA biosynthesis. Its function is as follows. Acts as a sulfur carrier required for 2-thiolation of mcm(5)S(2)U at tRNA wobble positions of cytosolic tRNA(Lys), tRNA(Glu) and tRNA(Gln). Serves as sulfur donor in tRNA 2-thiolation reaction by being thiocarboxylated (-COSH) at its C-terminus by MOCS3. The sulfur is then transferred to tRNA to form 2-thiolation of mcm(5)S(2)U. Also acts as a ubiquitin-like protein (UBL) that is covalently conjugated via an isopeptide bond to lysine residues of target proteins such as Prx2/Jafrac1, Ciao1, Eip71CD and GILT1. The thiocarboxylated form serves as substrate for conjugation and oxidative stress specifically induces the formation of UBL-protein conjugates. This is Ubiquitin-related modifier 1 homolog from Drosophila erecta (Fruit fly).